The primary structure comprises 176 residues: uncharacterized protein (176 aa).

Residues 15 to 28 show a composition bias toward polar residues; that stretch reads TSSNPPASASQSTG. Disordered regions lie at residues 15 to 100 and 125 to 176; these read TSSN…TSAG and ASLR…NLGA. Residues 43 to 52 show a composition bias toward basic and acidic residues; it reads FIDKVTDKPS.

This is an uncharacterized protein from Homo sapiens (Human).